A 470-amino-acid chain; its full sequence is L-seryl-tRNA(Sec) selenium transferase (470 aa).

K294 is modified (N6-(pyridoxal phosphate)lysine).

This sequence belongs to the SelA family. Requires pyridoxal 5'-phosphate as cofactor.

The protein localises to the cytoplasm. The enzyme catalyses L-seryl-tRNA(Sec) + selenophosphate + H(+) = L-selenocysteinyl-tRNA(Sec) + phosphate. The protein operates within aminoacyl-tRNA biosynthesis; selenocysteinyl-tRNA(Sec) biosynthesis; selenocysteinyl-tRNA(Sec) from L-seryl-tRNA(Sec) (bacterial route): step 1/1. Its function is as follows. Converts seryl-tRNA(Sec) to selenocysteinyl-tRNA(Sec) required for selenoprotein biosynthesis. The protein is L-seryl-tRNA(Sec) selenium transferase of Solidesulfovibrio magneticus (strain ATCC 700980 / DSM 13731 / RS-1) (Desulfovibrio magneticus).